Reading from the N-terminus, the 595-residue chain is Arginine--tRNA ligase (595 aa).

Residues 132-142 (ANPTGPLHVGH) carry the 'HIGH' region motif.

It belongs to the class-I aminoacyl-tRNA synthetase family. As to quaternary structure, monomer.

Its subcellular location is the cytoplasm. The enzyme catalyses tRNA(Arg) + L-arginine + ATP = L-arginyl-tRNA(Arg) + AMP + diphosphate. The protein is Arginine--tRNA ligase of Cupriavidus pinatubonensis (strain JMP 134 / LMG 1197) (Cupriavidus necator (strain JMP 134)).